The following is a 423-amino-acid chain: Putative transmembrane protein ORF103 (423 aa).

A compositionally biased stretch (basic and acidic residues) spans 43-57; sequence EPKIEQEEPQQKPEV. The segment at 43–91 is disordered; it reads EPKIEQEEPQQKPEVVDVYSNETDKNEEEVSIITSEDEEEDEKGMLFKR. Positions 67–84 are enriched in acidic residues; that stretch reads KNEEEVSIITSEDEEEDE. 2 consecutive transmembrane segments (helical) span residues 125–145 and 162–182; these read IIGI…VAVL and FSLC…GLAI. The interval 253–282 is disordered; sequence DESGSEVSSEDEESDQETLLRNRKMPTNSK. The next 2 helical transmembrane spans lie at 326–346 and 366–386; these read LISA…IVGS and IPTL…MCVL.

The protein localises to the host membrane. This is Putative transmembrane protein ORF103 from Magallana gigas (Pacific oyster).